The chain runs to 683 residues: Translation factor guf1, mitochondrial (683 aa).

A mitochondrion-targeting transit peptide spans 1–43; that stretch reads MRGCLQLARWLSAAPKGTAASLTRAPFVLANAPRYFTSSASRA. The 185-residue stretch at 66–250 folds into the tr-type G domain; sequence ERYRNFCIVA…KIPAYGHFPV (185 aa). GTP is bound by residues 75-82, 139-143, and 193-196; these read AHVDHGKS, DTPGH, and NKVD.

It belongs to the TRAFAC class translation factor GTPase superfamily. Classic translation factor GTPase family. LepA subfamily.

The protein localises to the mitochondrion inner membrane. The catalysed reaction is GTP + H2O = GDP + phosphate + H(+). Promotes mitochondrial protein synthesis. May act as a fidelity factor of the translation reaction, by catalyzing a one-codon backward translocation of tRNAs on improperly translocated ribosomes. Binds to mitochondrial ribosomes in a GTP-dependent manner. This Aspergillus fumigatus (strain ATCC MYA-4609 / CBS 101355 / FGSC A1100 / Af293) (Neosartorya fumigata) protein is Translation factor guf1, mitochondrial (guf1).